The chain runs to 827 residues: Glycerol-3-phosphate acyltransferase (827 aa).

The HXXXXD motif motif lies at 325 to 330 (CHRSHM).

It belongs to the GPAT/DAPAT family.

It localises to the cell inner membrane. The enzyme catalyses sn-glycerol 3-phosphate + an acyl-CoA = a 1-acyl-sn-glycero-3-phosphate + CoA. Its pathway is phospholipid metabolism; CDP-diacylglycerol biosynthesis; CDP-diacylglycerol from sn-glycerol 3-phosphate: step 1/3. The sequence is that of Glycerol-3-phosphate acyltransferase from Shigella flexneri serotype 5b (strain 8401).